The sequence spans 227 residues: Calcium-binding protein 1 (227 aa).

A lipid anchor (N-myristoyl glycine) is attached at Gly-2. The S-palmitoyl cysteine moiety is linked to residue Cys-4. EF-hand domains are found at residues 82–117, 136–153, 159–194, and 196–227; these read EEIE…MGYM, GHVD…KLLA, IGVK…LLGH, and VGHR…MMSR. Residues Asp-95, Asp-97, Asp-99, Tyr-101, and Asp-106 each coordinate Ca(2+). Positions 172, 174, 176, and 178 each coordinate Ca(2+). At Ser-180 the chain carries Phosphoserine. Residues Glu-183, Asp-209, Asn-211, Asp-213, Arg-215, and Glu-220 each coordinate Ca(2+).

As to quaternary structure, homodimer; when bound to calcium or magnesium. Interacts (via C-terminus) with ITPR1, ITPR2 and ITPR3. This binding is calcium dependent and the interaction correlates with calcium concentration. An additional calcium-independent interaction with the N-terminus of ITPR1 results in a decreased InsP(3) binding to the receptor. Interacts with CACNA1A (via C-terminal CDB motif) in the pre- and postsynaptic membranes. Interacts with CACNA1D and CACNA1C (via C-terminal C and IQ motifs). The binding to the C motif is calcium independent whereas the binding to IQ requires the presence of calcium and is mutually exclusive with calmodulin binding. Interacts with TRPC5 (via C-terminus). Interacts (via EF-hands 1 and 2) at microtubules with MAP1LC3B. Interacts with MYO1C. Interacts (via EF-hands 1 and 2) with NSMF (via the central NLS-containing motif region), the interaction occurs in a calcium dependent manner after synaptic NMDA receptor stimulation and prevents nuclear import of NSMF. Interacts with SPACA9 homolog. Phosphorylated. The phosphorylation regulates the activity. As to expression, expressed in the inner retina, specifically in amacrine cells and in cone OFF-bipolar cells (at protein level).

Its function is as follows. Modulates calcium-dependent activity of inositol 1,4,5-triphosphate receptors (ITPRs). Inhibits agonist-induced intracellular calcium signaling. Enhances inactivation and does not support calcium-dependent facilitation of voltage-dependent P/Q-type calcium channels. Causes calcium-dependent facilitation and inhibits inactivation of L-type calcium channels by binding to the same sites as calmodulin in the C-terminal domain of CACNA1C, but has an opposite effect on channel function. Suppresses the calcium-dependent inactivation of CACNA1D. Inhibits TRPC5 channels. Prevents NMDA receptor-induced cellular degeneration. Required for the normal transfer of light signals through the retina. The chain is Calcium-binding protein 1 (Cabp1) from Mus musculus (Mouse).